A 747-amino-acid chain; its full sequence is Plakophilin-1 (747 aa).

The segment at 1-234 (MNHSPLKTAL…SFGHSRASSK (234 aa)) is required for binding to single stranded DNA. Residues 1 to 286 (MNHSPLKTAL…ESAKQQVYQL (286 aa)) form a required for interaction with EIF4A1 region. Phosphoserine is present on S4. A disordered region spans residues 48–68 (TVKRQKSKSSQSSTLSHSNRG). Phosphorylation in this region is required for cytoplasmic localization and protein stabilization regions lie at residues 54 to 69 (SKSSQSSTLSHSNRGS) and 116 to 191 (RFSS…STCS). At S118 the chain carries Phosphoserine; by PKB/AKT2. A phosphoserine mark is found at S119, S121, and S142. Residues 160-269 (YCDPRGTLRK…KYQAIGAYYI (110 aa)) form a required for WNT-mediated nuclear localization region. ARM repeat units lie at residues 243-274 (SGLTIPKAVQYLSSQDEKYQAIGAYYIQHTCF), 275-316 (QDES…NLVF), 317-359 (RSTT…NLSS), 360-415 (TDEL…KRLG), 416-463 (MREL…NCVA), 525-556 (NYDCPLPEEETNPKGSGWLYHSDAIRTYLNLM), 557-603 (GKSK…IARL), 604-649 (LQSG…SHTG), and 650-713 (NTSN…DMWS).

It belongs to the beta-catenin family. Part of a complex that contains DSG3, PKP1, YAP1 and YWHAG; the complex is required for localization of DSG3 and YAP1 to the cell membrane in keratinocytes. Interacts with DSP. Interacts (via N-terminus) with KRT5/CK5, KRT8/CK8 (via rod domain), KRT15/CK15 and KRT18/CK18 (via rod domain) as part of intermediate filaments. Interacts with VIM (via rod domain). Interacts with DSP. Interacts with DES. Interacts with FXR1; the interaction may facilitate the binding of PKP1 to PKP2, PKP3 and DSP mRNA. Interacts (via N-terminus) with EIF4A1; the interaction promotes EIF4A1 recruitment to the cap-dependent translation complex and EIF4A1 ATPase activity. Interacts with TJP1/ZO-1; the interaction facilitates TJP1/ZO-1 localization to the plasma membrane. Interacts (when phosphorylated) with YWHAG; the interaction results in translocation of PKP1 to the cytoplasm and loss of intercellular adhesion in keratinocytes. Post-translationally, phosphorylated by AKT2; required for interaction with YWHAG and subsequent localization away from desmosomes to the cytoplasm. Phosphorylation of Ser-118 by AKT2 promotes PKP1-driven cap-dependent mRNA translation and decreases intercellular adhesion, phosphorylation is promoted by insulin. Phosphorylation by RIPK4 at the N-terminus is required for its role in differentiation of keratinocytes and DSG1 localization at cell junctions. In terms of tissue distribution, expressed in stratified squamous, complex, glandular duct and bladder epithelia (at protein level). As to expression, widely expressed (at protein level).

It is found in the cell junction. The protein localises to the desmosome. It localises to the nucleus. The protein resides in the cytoplasm. Its subcellular location is the perinuclear region. It is found in the cell membrane. The protein localises to the stress granule. In terms of biological role, a component of desmosome cell-cell junctions which are required for positive regulation of cellular adhesion. Plays a role in desmosome protein expression regulation and localization to the desmosomal plaque, thereby maintaining cell sheet integrity and anchorage of desmosomes to intermediate filaments. Required for localization of DSG3 and YAP1 to the cell membrane in keratinocytes in response to mechanical strain, via the formation of an interaction complex composed of DSG3, YAP1, PKP1 and YWHAG. Positively regulates differentiation of keratinocytes, potentially via promoting localization of DSG1 at desmosome cell junctions. Required for calcium-independent development and maturation of desmosome plaques specifically at lateral cell-cell contacts in differentiating keratinocytes. Plays a role in the maintenance of DSG3 protein abundance, DSG3 clustering and localization of these clusters to the cell membrane in keratinocytes. May also promote keratinocyte proliferation and morphogenesis during postnatal development. Required for tight junction inside-out transepidermal barrier function of the skin. Promotes Wnt-mediated proliferation and differentiation of ameloblasts, via facilitating TJP1/ZO-1 localization to tight junctions. Binds single-stranded DNA (ssDNA), and may thereby play a role in sensing DNA damage and promoting cell survival. Positively regulates cap-dependent translation and as a result cell proliferation, via recruitment of EIF4A1 to the initiation complex and promotion of EIF4A1 ATPase activity. Regulates the mRNA stability and protein abundance of desmosome components PKP2, PKP3, DSC2 and DSP, potentially via its interaction with FXR1. The chain is Plakophilin-1 (PKP1) from Homo sapiens (Human).